Reading from the N-terminus, the 29-residue chain is U20-ctenitoxin-Co1a (29 aa).

Cystine bridges form between Cys3-Cys16 and Cys10-Cys21.

Expressed by the venom gland.

It localises to the secreted. This Ctenus ornatus (Brazilian spider) protein is U20-ctenitoxin-Co1a.